The primary structure comprises 264 residues: Thiazole synthase (264 aa).

Lys-98 serves as the catalytic Schiff-base intermediate with DXP. Residues Gly-159, 185–186 (AG), and 207–208 (AS) each bind 1-deoxy-D-xylulose 5-phosphate.

It belongs to the ThiG family. As to quaternary structure, homotetramer. Forms heterodimers with either ThiH or ThiS.

Its subcellular location is the cytoplasm. It carries out the reaction [ThiS sulfur-carrier protein]-C-terminal-Gly-aminoethanethioate + 2-iminoacetate + 1-deoxy-D-xylulose 5-phosphate = [ThiS sulfur-carrier protein]-C-terminal Gly-Gly + 2-[(2R,5Z)-2-carboxy-4-methylthiazol-5(2H)-ylidene]ethyl phosphate + 2 H2O + H(+). It participates in cofactor biosynthesis; thiamine diphosphate biosynthesis. Catalyzes the rearrangement of 1-deoxy-D-xylulose 5-phosphate (DXP) to produce the thiazole phosphate moiety of thiamine. Sulfur is provided by the thiocarboxylate moiety of the carrier protein ThiS. In vitro, sulfur can be provided by H(2)S. In Streptomyces griseus subsp. griseus (strain JCM 4626 / CBS 651.72 / NBRC 13350 / KCC S-0626 / ISP 5235), this protein is Thiazole synthase.